The sequence spans 344 residues: Phenylalanine--tRNA ligase alpha subunit (344 aa).

Glu-256 is a binding site for Mg(2+).

This sequence belongs to the class-II aminoacyl-tRNA synthetase family. Phe-tRNA synthetase alpha subunit type 1 subfamily. Tetramer of two alpha and two beta subunits. Mg(2+) serves as cofactor.

The protein resides in the cytoplasm. The catalysed reaction is tRNA(Phe) + L-phenylalanine + ATP = L-phenylalanyl-tRNA(Phe) + AMP + diphosphate + H(+). The protein is Phenylalanine--tRNA ligase alpha subunit of Bacillus pumilus (strain SAFR-032).